The sequence spans 333 residues: Fructose-1,6-bisphosphatase class 1 (333 aa).

Mg(2+)-binding residues include glutamate 92, aspartate 113, leucine 115, and aspartate 116. Substrate is bound by residues 116 to 119 (DGSS), asparagine 209, tyrosine 242, and lysine 272. Glutamate 278 serves as a coordination point for Mg(2+).

Belongs to the FBPase class 1 family. As to quaternary structure, homotetramer. Mg(2+) is required as a cofactor.

It is found in the cytoplasm. The catalysed reaction is beta-D-fructose 1,6-bisphosphate + H2O = beta-D-fructose 6-phosphate + phosphate. The protein operates within carbohydrate biosynthesis; Calvin cycle. The chain is Fructose-1,6-bisphosphatase class 1 from Chlorobaculum parvum (strain DSM 263 / NCIMB 8327) (Chlorobium vibrioforme subsp. thiosulfatophilum).